A 189-amino-acid chain; its full sequence is Glycerol-3-phosphate acyltransferase (189 aa).

Helical transmembrane passes span 1 to 21 (MVWLLAILAYLLGSLSFAVLL), 50 to 70 (KLAILTLLGDVGKGLLPVLVA), 72 to 92 (WLGLGVMEEAWVGIAAVIGHL), 111 to 131 (MLLGLYPPAVLLAAAAWLLTF), and 151 to 171 (LLAWQQPGALLPMTVLTALIV).

Belongs to the PlsY family. Probably interacts with PlsX.

It localises to the cell inner membrane. The catalysed reaction is an acyl phosphate + sn-glycerol 3-phosphate = a 1-acyl-sn-glycero-3-phosphate + phosphate. Its pathway is lipid metabolism; phospholipid metabolism. In terms of biological role, catalyzes the transfer of an acyl group from acyl-phosphate (acyl-PO(4)) to glycerol-3-phosphate (G3P) to form lysophosphatidic acid (LPA). This enzyme utilizes acyl-phosphate as fatty acyl donor, but not acyl-CoA or acyl-ACP. This is Glycerol-3-phosphate acyltransferase from Pseudomonas paraeruginosa (strain DSM 24068 / PA7) (Pseudomonas aeruginosa (strain PA7)).